Consider the following 182-residue polypeptide: Ribosome-recycling factor (182 aa).

Belongs to the RRF family.

It localises to the cytoplasm. Functionally, responsible for the release of ribosomes from messenger RNA at the termination of protein biosynthesis. May increase the efficiency of translation by recycling ribosomes from one round of translation to another. The protein is Ribosome-recycling factor of Prochlorococcus marinus subsp. pastoris (strain CCMP1986 / NIES-2087 / MED4).